The following is a 150-amino-acid chain: Cytochrome c-type biogenesis protein CcmE (150 aa).

The Cytoplasmic portion of the chain corresponds to 1 to 9 (MRNLKKTRR). The helical; Signal-anchor for type II membrane protein transmembrane segment at 10–30 (IQILLVAGGALVLSTALIGYG) threads the bilayer. Residues 31–150 (MRDGINFFRA…VYRDPAQPEG (120 aa)) are Periplasmic-facing. Positions 123 and 127 each coordinate heme.

The protein belongs to the CcmE/CycJ family.

It localises to the cell inner membrane. Its function is as follows. Heme chaperone required for the biogenesis of c-type cytochromes. Transiently binds heme delivered by CcmC and transfers the heme to apo-cytochromes in a process facilitated by CcmF and CcmH. This is Cytochrome c-type biogenesis protein CcmE from Rhodobacter capsulatus (strain ATCC BAA-309 / NBRC 16581 / SB1003).